The primary structure comprises 139 residues: MIDFDNRTDYEFDINKLNDIYNLLTDKDIELILTDDEEIKELNSQFRNKDKATDVLSFPLEAMPGMPLGSIVISIDTAKKGAEEFGHSVDDEIRLLFLHGLLHLLGYDHETDNGEMRAKEEEIIKKLNLPSSLIVRNED.

Zn(2+)-binding residues include His99, His103, and His109.

Belongs to the endoribonuclease YbeY family. The cofactor is Zn(2+).

It is found in the cytoplasm. In terms of biological role, single strand-specific metallo-endoribonuclease involved in late-stage 70S ribosome quality control and in maturation of the 3' terminus of the 16S rRNA. In Nautilia profundicola (strain ATCC BAA-1463 / DSM 18972 / AmH), this protein is Endoribonuclease YbeY.